We begin with the raw amino-acid sequence, 395 residues long: Trans-2-enoyl-CoA reductase [NADH] (395 aa).

Residues 47 to 52 (GASTGY), 73 to 74 (FE), 110 to 111 (DA), and 138 to 139 (LA) each bind NAD(+). A substrate-binding site is contributed by Tyr-224. Tyr-234 acts as the Proton donor in catalysis. NAD(+)-binding positions include Lys-243 and 272 to 274 (VVT).

This sequence belongs to the TER reductase family. As to quaternary structure, monomer.

It catalyses the reaction a 2,3-saturated acyl-CoA + NAD(+) = a (2E)-enoyl-CoA + NADH + H(+). It participates in lipid metabolism; fatty acid biosynthesis. Involved in the fatty acid synthesis (FAS II). Catalyzes the reduction of a carbon-carbon double bond in an enoyl moiety that is covalently linked to a coenzyme A (CoA). The chain is Trans-2-enoyl-CoA reductase [NADH] from Ruminiclostridium cellulolyticum (strain ATCC 35319 / DSM 5812 / JCM 6584 / H10) (Clostridium cellulolyticum).